A 379-amino-acid chain; its full sequence is 3-isopropylmalate dehydrogenase 1 (379 aa).

Positions 101, 111, 139, and 230 each coordinate substrate. Mg(2+)-binding residues include Asp230, Asp254, and Asp258. 293 to 305 contributes to the NAD(+) binding site; it reads GSAPDIAGKGIAN.

Belongs to the isocitrate and isopropylmalate dehydrogenases family. LeuB type 1 subfamily. In terms of assembly, homodimer. The cofactor is Mg(2+). Mn(2+) is required as a cofactor.

Its subcellular location is the cytoplasm. It catalyses the reaction (2R,3S)-3-isopropylmalate + NAD(+) = 4-methyl-2-oxopentanoate + CO2 + NADH. The protein operates within amino-acid biosynthesis; L-leucine biosynthesis; L-leucine from 3-methyl-2-oxobutanoate: step 3/4. Its function is as follows. Catalyzes the oxidation of 3-carboxy-2-hydroxy-4-methylpentanoate (3-isopropylmalate) to 3-carboxy-4-methyl-2-oxopentanoate. The product decarboxylates to 4-methyl-2 oxopentanoate. The polypeptide is 3-isopropylmalate dehydrogenase 1 (Bradyrhizobium diazoefficiens (strain JCM 10833 / BCRC 13528 / IAM 13628 / NBRC 14792 / USDA 110)).